A 695-amino-acid chain; its full sequence is UvrABC system protein B (695 aa).

Residues 45-434 (EGIEDGLSFQ…QVVEQVVRPT (390 aa)) form the Helicase ATP-binding domain. An ATP-binding site is contributed by 58–65 (GVTGSGKT). Positions 111 to 134 (YYDYYQPEAYVPQRDLFIEKDSSI) match the Beta-hairpin motif. The region spanning 449–602 (QVDDLLSEIN…QMAFNEANGI (154 aa)) is the Helicase C-terminal domain. A UVR domain is found at 646–681 (SKEIKRLEKLMMDHAKNLEFEKAAQVRDQLAKLKAQ).

The protein belongs to the UvrB family. Forms a heterotetramer with UvrA during the search for lesions. Interacts with UvrC in an incision complex.

Its subcellular location is the cytoplasm. Functionally, the UvrABC repair system catalyzes the recognition and processing of DNA lesions. A damage recognition complex composed of 2 UvrA and 2 UvrB subunits scans DNA for abnormalities. Upon binding of the UvrA(2)B(2) complex to a putative damaged site, the DNA wraps around one UvrB monomer. DNA wrap is dependent on ATP binding by UvrB and probably causes local melting of the DNA helix, facilitating insertion of UvrB beta-hairpin between the DNA strands. Then UvrB probes one DNA strand for the presence of a lesion. If a lesion is found the UvrA subunits dissociate and the UvrB-DNA preincision complex is formed. This complex is subsequently bound by UvrC and the second UvrB is released. If no lesion is found, the DNA wraps around the other UvrB subunit that will check the other stand for damage. This is UvrABC system protein B from Cupriavidus pinatubonensis (strain JMP 134 / LMG 1197) (Cupriavidus necator (strain JMP 134)).